We begin with the raw amino-acid sequence, 327 residues long: Succinylglutamate desuccinylase (327 aa).

Positions 53, 56, and 146 each coordinate Zn(2+). Glutamate 209 is an active-site residue.

The protein belongs to the AspA/AstE family. Succinylglutamate desuccinylase subfamily. It depends on Zn(2+) as a cofactor.

It catalyses the reaction N-succinyl-L-glutamate + H2O = L-glutamate + succinate. It functions in the pathway amino-acid degradation; L-arginine degradation via AST pathway; L-glutamate and succinate from L-arginine: step 5/5. Its function is as follows. Transforms N(2)-succinylglutamate into succinate and glutamate. The sequence is that of Succinylglutamate desuccinylase from Serratia proteamaculans (strain 568).